The following is a 250-amino-acid chain: Eukaryotic translation initiation factor 3 subunit K (250 aa).

In terms of domain architecture, PCI spans 54-235; the sequence is YDLFGNLAIL…DVKAGVVKEN (182 aa).

The protein belongs to the eIF-3 subunit K family. Component of the eukaryotic translation initiation factor 3 (eIF-3) complex.

Its subcellular location is the cytoplasm. Functionally, component of the eukaryotic translation initiation factor 3 (eIF-3) complex, which is involved in protein synthesis of a specialized repertoire of mRNAs and, together with other initiation factors, stimulates binding of mRNA and methionyl-tRNAi to the 40S ribosome. The eIF-3 complex specifically targets and initiates translation of a subset of mRNAs involved in cell proliferation. This Cryptococcus neoformans var. neoformans serotype D (strain B-3501A) (Filobasidiella neoformans) protein is Eukaryotic translation initiation factor 3 subunit K.